A 311-amino-acid polypeptide reads, in one-letter code: Ribosomal RNA small subunit methyltransferase A (311 aa).

Residues N29, V31, G56, E77, D107, and N126 each coordinate S-adenosyl-L-methionine.

Belongs to the class I-like SAM-binding methyltransferase superfamily. rRNA adenine N(6)-methyltransferase family. RsmA subfamily.

It is found in the cytoplasm. The enzyme catalyses adenosine(1518)/adenosine(1519) in 16S rRNA + 4 S-adenosyl-L-methionine = N(6)-dimethyladenosine(1518)/N(6)-dimethyladenosine(1519) in 16S rRNA + 4 S-adenosyl-L-homocysteine + 4 H(+). Functionally, specifically dimethylates two adjacent adenosines (A1518 and A1519) in the loop of a conserved hairpin near the 3'-end of 16S rRNA in the 30S particle. May play a critical role in biogenesis of 30S subunits. In Mycolicibacterium vanbaalenii (strain DSM 7251 / JCM 13017 / BCRC 16820 / KCTC 9966 / NRRL B-24157 / PYR-1) (Mycobacterium vanbaalenii), this protein is Ribosomal RNA small subunit methyltransferase A.